Consider the following 435-residue polypeptide: Histidine--tRNA ligase (435 aa).

This sequence belongs to the class-II aminoacyl-tRNA synthetase family. Homodimer.

It is found in the cytoplasm. The enzyme catalyses tRNA(His) + L-histidine + ATP = L-histidyl-tRNA(His) + AMP + diphosphate + H(+). The protein is Histidine--tRNA ligase of Synechococcus elongatus (strain ATCC 33912 / PCC 7942 / FACHB-805) (Anacystis nidulans R2).